Consider the following 302-residue polypeptide: MTKTPLTIEEPIFSHLPVLPQEVITGLVVRPGGRYLDVTVGGGGHSRLILEAAPDVKLTAVDQDGDALTAAKQELAEFGEQVKFVRSNFAAYDFPSTSFDGVLADLGVSSYHLDTPERGFSFRHQASLDMRMDQRQSLSAADVINDWDEVELANIFFKYGEERLSRRIARRIVEKRPFHTTTELAEAIASSVPPKYRYGRIHPATRVFQALRIVVNDELKSLETFIEKAPKALVPGGRIAIISFHSLEDRLVKHGLRNSPLLKVLTKKPIIATDDEIANNPRSRSAKLRIAEKQAETGDEDN.

S-adenosyl-L-methionine contacts are provided by residues 43-45 (GGH), Asp-62, Phe-89, Asp-105, and His-112. Positions 276-302 (EIANNPRSRSAKLRIAEKQAETGDEDN) are disordered.

The protein belongs to the methyltransferase superfamily. RsmH family.

It localises to the cytoplasm. The catalysed reaction is cytidine(1402) in 16S rRNA + S-adenosyl-L-methionine = N(4)-methylcytidine(1402) in 16S rRNA + S-adenosyl-L-homocysteine + H(+). Specifically methylates the N4 position of cytidine in position 1402 (C1402) of 16S rRNA. This is Ribosomal RNA small subunit methyltransferase H from Nostoc sp. (strain PCC 7120 / SAG 25.82 / UTEX 2576).